An 874-amino-acid chain; its full sequence is Alanine--tRNA ligase (874 aa).

Residues histidine 564, histidine 568, cysteine 666, and histidine 670 each contribute to the Zn(2+) site.

The protein belongs to the class-II aminoacyl-tRNA synthetase family. It depends on Zn(2+) as a cofactor.

Its subcellular location is the cytoplasm. It catalyses the reaction tRNA(Ala) + L-alanine + ATP = L-alanyl-tRNA(Ala) + AMP + diphosphate. Its function is as follows. Catalyzes the attachment of alanine to tRNA(Ala) in a two-step reaction: alanine is first activated by ATP to form Ala-AMP and then transferred to the acceptor end of tRNA(Ala). Also edits incorrectly charged Ser-tRNA(Ala) and Gly-tRNA(Ala) via its editing domain. The protein is Alanine--tRNA ligase of Carboxydothermus hydrogenoformans (strain ATCC BAA-161 / DSM 6008 / Z-2901).